A 197-amino-acid chain; its full sequence is Recombination protein RecR (197 aa).

The segment at 57-72 (CSRCGYLTDFDPCLIC) adopts a C4-type zinc-finger fold. The Toprim domain maps to 80–174 (SLICIGEESS…KVTRLAHGLP (95 aa)).

It belongs to the RecR family.

In terms of biological role, may play a role in DNA repair. It seems to be involved in an RecBC-independent recombinational process of DNA repair. It may act with RecF and RecO. The sequence is that of Recombination protein RecR from Syntrophomonas wolfei subsp. wolfei (strain DSM 2245B / Goettingen).